The following is a 248-amino-acid chain: PF03932 family protein CutC (248 aa).

Belongs to the CutC family. In terms of assembly, homodimer.

It is found in the cytoplasm. This is PF03932 family protein CutC from Shigella boydii serotype 18 (strain CDC 3083-94 / BS512).